The chain runs to 1070 residues: DNA-directed RNA polymerase subunit beta (1070 aa).

The protein belongs to the RNA polymerase beta chain family. In plastids the minimal PEP RNA polymerase catalytic core is composed of four subunits: alpha, beta, beta', and beta''. When a (nuclear-encoded) sigma factor is associated with the core the holoenzyme is formed, which can initiate transcription.

The protein resides in the plastid. It is found in the chloroplast. It carries out the reaction RNA(n) + a ribonucleoside 5'-triphosphate = RNA(n+1) + diphosphate. In terms of biological role, DNA-dependent RNA polymerase catalyzes the transcription of DNA into RNA using the four ribonucleoside triphosphates as substrates. The chain is DNA-directed RNA polymerase subunit beta from Gossypium hirsutum (Upland cotton).